Here is a 321-residue protein sequence, read N- to C-terminus: Acetyl-coenzyme A carboxylase carboxyl transferase subunit alpha (321 aa).

The CoA carboxyltransferase C-terminal domain maps to 39–293 (RLQQKSQTLA…RRALGDSLRQ (255 aa)).

It belongs to the AccA family. In terms of assembly, acetyl-CoA carboxylase is a heterohexamer composed of biotin carboxyl carrier protein (AccB), biotin carboxylase (AccC) and two subunits each of ACCase subunit alpha (AccA) and ACCase subunit beta (AccD).

It localises to the cytoplasm. It catalyses the reaction N(6)-carboxybiotinyl-L-lysyl-[protein] + acetyl-CoA = N(6)-biotinyl-L-lysyl-[protein] + malonyl-CoA. The protein operates within lipid metabolism; malonyl-CoA biosynthesis; malonyl-CoA from acetyl-CoA: step 1/1. Component of the acetyl coenzyme A carboxylase (ACC) complex. First, biotin carboxylase catalyzes the carboxylation of biotin on its carrier protein (BCCP) and then the CO(2) group is transferred by the carboxyltransferase to acetyl-CoA to form malonyl-CoA. The sequence is that of Acetyl-coenzyme A carboxylase carboxyl transferase subunit alpha from Bordetella avium (strain 197N).